A 274-amino-acid polypeptide reads, in one-letter code: Bis(5'-nucleosyl)-tetraphosphatase, symmetrical (274 aa).

It belongs to the Ap4A hydrolase family.

The enzyme catalyses P(1),P(4)-bis(5'-adenosyl) tetraphosphate + H2O = 2 ADP + 2 H(+). Hydrolyzes diadenosine 5',5'''-P1,P4-tetraphosphate to yield ADP. The polypeptide is Bis(5'-nucleosyl)-tetraphosphatase, symmetrical (Shewanella baltica (strain OS185)).